We begin with the raw amino-acid sequence, 386 residues long: Succinate--CoA ligase [ADP-forming] subunit beta (386 aa).

One can recognise an ATP-grasp domain in the interval 9–244 (KELLRDYGVP…LNEEDEKEIE (236 aa)). ATP-binding positions include Lys46, 53–55 (GRG), Glu99, Cys102, and Glu107. Positions 199 and 213 each coordinate Mg(2+). Residues Asn264 and 321-323 (GIM) each bind substrate.

The protein belongs to the succinate/malate CoA ligase beta subunit family. In terms of assembly, heterotetramer of two alpha and two beta subunits. It depends on Mg(2+) as a cofactor.

It catalyses the reaction succinate + ATP + CoA = succinyl-CoA + ADP + phosphate. The catalysed reaction is GTP + succinate + CoA = succinyl-CoA + GDP + phosphate. Its pathway is carbohydrate metabolism; tricarboxylic acid cycle; succinate from succinyl-CoA (ligase route): step 1/1. Its function is as follows. Succinyl-CoA synthetase functions in the citric acid cycle (TCA), coupling the hydrolysis of succinyl-CoA to the synthesis of either ATP or GTP and thus represents the only step of substrate-level phosphorylation in the TCA. The beta subunit provides nucleotide specificity of the enzyme and binds the substrate succinate, while the binding sites for coenzyme A and phosphate are found in the alpha subunit. This Alkaliphilus oremlandii (strain OhILAs) (Clostridium oremlandii (strain OhILAs)) protein is Succinate--CoA ligase [ADP-forming] subunit beta.